Here is a 255-residue protein sequence, read N- to C-terminus: Small ribosomal subunit protein uS2 (255 aa).

Belongs to the universal ribosomal protein uS2 family.

This is Small ribosomal subunit protein uS2 from Streptococcus thermophilus (strain ATCC BAA-491 / LMD-9).